The chain runs to 78 residues: Translational regulator CsrA (78 aa).

It belongs to the CsrA/RsmA family. As to quaternary structure, homodimer; the beta-strands of each monomer intercalate to form a hydrophobic core, while the alpha-helices form wings that extend away from the core.

It is found in the cytoplasm. In terms of biological role, a translational regulator that binds mRNA to regulate translation initiation and/or mRNA stability. Usually binds in the 5'-UTR at or near the Shine-Dalgarno sequence preventing ribosome-binding, thus repressing translation. Its main target seems to be the major flagellin gene, while its function is anatagonized by FliW. In Nitratidesulfovibrio vulgaris (strain ATCC 29579 / DSM 644 / CCUG 34227 / NCIMB 8303 / VKM B-1760 / Hildenborough) (Desulfovibrio vulgaris), this protein is Translational regulator CsrA.